Reading from the N-terminus, the 509-residue chain is Fumarate hydratase, mitochondrial (509 aa).

A mitochondrion-targeting transit peptide spans 1–43 (MYRSARSLHRFSASLSDLRAAQRSIKARNVCPAPGLRHQTVRM). Substrate-binding positions include 144-146 (SGT), 175-178 (HPND), 185-187 (SSN), and Thr-233. Residue His-234 is the Proton donor/acceptor of the active site. The active site involves Ser-364. Residues Ser-365 and 370 to 372 (KVN) contribute to the substrate site.

It belongs to the class-II fumarase/aspartase family. Fumarase subfamily. In terms of assembly, homotetramer.

The protein resides in the mitochondrion. It is found in the cytoplasm. Its subcellular location is the cytosol. It localises to the nucleus. The protein localises to the chromosome. The catalysed reaction is (S)-malate = fumarate + H2O. Its pathway is carbohydrate metabolism; tricarboxylic acid cycle; (S)-malate from fumarate: step 1/1. Catalyzes the reversible stereospecific interconversion of fumarate to L-malate. Experiments in other species have demonstrated that specific isoforms of this protein act in defined pathways and favor one direction over the other. In terms of biological role, catalyzes the hydration of fumarate to L-malate in the tricarboxylic acid (TCA) cycle to facilitate a transition step in the production of energy in the form of NADH. Its function is as follows. Catalyzes the dehydration of L-malate to fumarate. Fumarate metabolism in the cytosol plays a role during urea cycle and arginine metabolism; fumarate being a by-product of the urea cycle and amino-acid catabolism. Also plays a role in DNA repair by promoting non-homologous end-joining (NHEJ). In response to DNA damage translocates to the nucleus and accumulates at DNA double-strand breaks (DSBs): acts by catalyzing formation of fumarate. This is Fumarate hydratase, mitochondrial from Danio rerio (Zebrafish).